A 314-amino-acid polypeptide reads, in one-letter code: Ribosome production factor 2 homolog (314 aa).

The 211-residue stretch at 28 to 238 (KKTLILHGTK…IRRNRLPNDS (211 aa)) folds into the Brix domain. A disordered region spans residues 238 to 314 (SLMKEAMRTS…VAKKMKVSSE (77 aa)). Composition is skewed to basic and acidic residues over residues 239-249 (LMKEAMRTSKD) and 275-314 (QKLKEMKLFDKSKGSKRERKDAKLKHKEETVAKKMKVSSE).

The protein belongs to the RPF2 family.

Its subcellular location is the nucleus. The protein resides in the nucleolus. In Arabidopsis thaliana (Mouse-ear cress), this protein is Ribosome production factor 2 homolog.